A 309-amino-acid chain; its full sequence is Probable ABC transporter permease protein YqgH (309 aa).

The next 6 helical transmembrane spans lie at 30–50, 88–108, 133–153, 165–185, 214–234, and 280–300; these read MIVT…TIFL, FIFG…PLGI, LVGI…VPFI, LLAG…SISA, LVPA…ARAF, and NTLW…ILLI. The region spanning 89–300 is the ABC transmembrane type-1 domain; sequence IFGSFAVTIL…VMSFLFILLI (212 aa).

This sequence belongs to the binding-protein-dependent transport system permease family. CysTW subfamily.

Its subcellular location is the cell membrane. Its function is as follows. Part of the binding-protein-dependent transport system YqgGHIJK. Probably responsible for the translocation of the substrate across the membrane. The polypeptide is Probable ABC transporter permease protein YqgH (yqgH) (Bacillus subtilis (strain 168)).